Consider the following 580-residue polypeptide: Arrestin domain-containing protein A (580 aa).

N-linked (GlcNAc...) asparagine glycans are attached at residues Asn27, Asn33, and Asn60. The segment at 31-54 (NVNTTSSHHHHHSNSGNAEVSFNG) is disordered. Disordered stretches follow at residues 67-86 (ETHS…EISI) and 95-114 (MTMS…HKES). A helical transmembrane segment spans residues 118–138 (NLSLGGIVGAVVGAVTGGVMI). 3 N-linked (GlcNAc...) asparagine glycosylation sites follow: Asn149, Asn341, and Asn342. The FYVE-type zinc finger occupies 468–528 (DEHATACRKC…VCEECYPIAT (61 aa)). Residues Cys474, Cys477, Cys490, Cys493, Cys498, Cys501, Cys520, and Cys523 each coordinate Zn(2+).

This sequence belongs to the arrestin family.

The protein localises to the membrane. The polypeptide is Arrestin domain-containing protein A (adcA) (Dictyostelium discoideum (Social amoeba)).